Here is a 280-residue protein sequence, read N- to C-terminus: 1-cyclohexenylcarbonyl-CoA reductase (280 aa).

Residues 22–25 (SRGI), 71–72 (DV), and N98 each bind NADP(+). Catalysis depends on proton acceptor residues Y158 and K165. Residues K165 and 194–196 (IDS) contribute to the NADP(+) site.

The protein belongs to the short-chain dehydrogenases/reductases (SDR) family. Homodimer.

The enzyme catalyses (4R,5R)-4,5-dihydroxycyclohex-2-ene-1-carbonyl-CoA + NADP(+) = (3R,4R)-3,4-dihydroxycyclohexa-1,5-diene-1-carbonyl-CoA + NADPH + H(+). It catalyses the reaction (3S)-3-hydroxycyclohexane-1-carbonyl-CoA + NADP(+) = (5S)-5-hydroxycyclohex-1-ene-1-carbonyl-CoA + NADPH + H(+). The catalysed reaction is cyclohexane-1-carbonyl-CoA + NADP(+) = cyclohex-1-ene-1-carbonyl-CoA + NADPH + H(+). The protein operates within antibiotic biosynthesis. With respect to regulation, inhibited by the thiol inhibitors p-chloromercuribenzoate, N-ethylmaleimide and iodoacetamide. Also inhibited by various divalent cations. In terms of biological role, involved in the biosynthesis of the antifungal antibiotic ansatrienin A (mycotrienin I). Catalyzes three of the reductive steps involved in the formation of the cyclohexanecarboxylic acid (CHC) moiety of ansatrienin from shikimic acid. Can use 3,4-dihydroxycyclohexa-1,5-diene-1-carbonyl-CoA, 5-hydroxycyclohex-1-ene-1-carbonyl-CoA and cyclohex-1-ene-1-carbonyl-CoA as substrates. The polypeptide is 1-cyclohexenylcarbonyl-CoA reductase (Streptomyces collinus).